Here is a 908-residue protein sequence, read N- to C-terminus: DNA mismatch repair protein MutS (908 aa).

662–669 (GPNMGGKS) is an ATP binding site.

This sequence belongs to the DNA mismatch repair MutS family.

Functionally, this protein is involved in the repair of mismatches in DNA. It is possible that it carries out the mismatch recognition step. This protein has a weak ATPase activity. In Rhizobium johnstonii (strain DSM 114642 / LMG 32736 / 3841) (Rhizobium leguminosarum bv. viciae), this protein is DNA mismatch repair protein MutS.